A 95-amino-acid chain; its full sequence is Large ribosomal subunit protein bL25 (95 aa).

Belongs to the bacterial ribosomal protein bL25 family. Part of the 50S ribosomal subunit; part of the 5S rRNA/L5/L18/L25 subcomplex. Contacts the 5S rRNA. Binds to the 5S rRNA independently of L5 and L18.

This is one of the proteins that binds to the 5S RNA in the ribosome where it forms part of the central protuberance. The chain is Large ribosomal subunit protein bL25 from Actinobacillus succinogenes (strain ATCC 55618 / DSM 22257 / CCUG 43843 / 130Z).